The chain runs to 189 residues: 7-methyl-GTP pyrophosphatase (189 aa).

The Proton acceptor role is filled by D71.

This sequence belongs to the Maf family. YceF subfamily. The cofactor is a divalent metal cation.

The protein localises to the cytoplasm. The enzyme catalyses N(7)-methyl-GTP + H2O = N(7)-methyl-GMP + diphosphate + H(+). Its function is as follows. Nucleoside triphosphate pyrophosphatase that hydrolyzes 7-methyl-GTP (m(7)GTP). May have a dual role in cell division arrest and in preventing the incorporation of modified nucleotides into cellular nucleic acids. In Bdellovibrio bacteriovorus (strain ATCC 15356 / DSM 50701 / NCIMB 9529 / HD100), this protein is 7-methyl-GTP pyrophosphatase.